Consider the following 316-residue polypeptide: Secondary metabolism regulator laeA (316 aa).

This sequence belongs to the methyltransferase superfamily. LaeA methyltransferase family. Component of the heterotrimeric velvet complex composed of laeA, veA and velB; VeA acting as a bridging protein between laeA and velB.

The protein localises to the nucleus. The catalysed reaction is L-methionyl-[protein] + S-adenosyl-L-methionine = S-methyl-L-methionyl-[protein] + S-adenosyl-L-homocysteine. Functionally, methyltransferase that performs automethylation. No other methyl-accepting substrate has been identified yet. Component of the velvet transcription factor complex that acts as a global regulator for secondary metabolite gene expression. Controls the biosynthetic gene cluster for beauvericin, a depsipeptide mycotoxin that functions as a virulence determinant. The velvet complex also regulates chromatin structure and transcription of siderophore biosynthetic genes and is required for infection of tomato plants. The velvet complex also governs expression of nitrate metabolism genes. This chain is Secondary metabolism regulator laeA, found in Fusarium oxysporum f. sp. lycopersici (strain 4287 / CBS 123668 / FGSC 9935 / NRRL 34936) (Fusarium vascular wilt of tomato).